We begin with the raw amino-acid sequence, 183 residues long: Putative manganese efflux pump MntP (183 aa).

6 helical membrane passes run 3-23, 43-63, 66-86, 107-127, 134-154, and 161-181; these read TISV…LSIY, TFGI…ILFI, ISLY…LMML, LIIM…TFSI, FLYT…GFIL, and ILGQ…SINI.

It belongs to the MntP (TC 9.B.29) family.

Its subcellular location is the cell inner membrane. Its function is as follows. Probably functions as a manganese efflux pump. The sequence is that of Putative manganese efflux pump MntP from Fusobacterium nucleatum subsp. nucleatum (strain ATCC 25586 / DSM 15643 / BCRC 10681 / CIP 101130 / JCM 8532 / KCTC 2640 / LMG 13131 / VPI 4355).